The following is a 291-amino-acid chain: 3-hydroxy-5-phosphonooxypentane-2,4-dione thiolase (291 aa).

The Schiff-base intermediate with substrate role is filled by Lys-203.

It belongs to the DeoC/FbaB aldolase family. As to quaternary structure, homodecamer.

The protein localises to the cytoplasm. It carries out the reaction dihydroxyacetone phosphate + acetyl-CoA = 3-hydroxy-2,4-dioxopentyl phosphate + CoA. Involved in the degradation of phospho-AI-2, thereby terminating induction of the lsr operon and closing the AI-2 signaling cycle. Catalyzes the transfer of an acetyl moiety from 3-hydroxy-5-phosphonooxypentane-2,4-dione to CoA to form glycerone phosphate and acetyl-CoA. This Photorhabdus laumondii subsp. laumondii (strain DSM 15139 / CIP 105565 / TT01) (Photorhabdus luminescens subsp. laumondii) protein is 3-hydroxy-5-phosphonooxypentane-2,4-dione thiolase.